A 344-amino-acid chain; its full sequence is MAAAKTILRSLAGETLPTPPIWMMRQAGRYLPEYKATRAQAGDFLSLCYNPELAAEVTLQPIRRYGFDAAILFADILLLPQALGADLWFVTGEGPRLSTITTQADFDKLKPVDEIDAVLNPIYETVRILRRELPQETTLIGFAGAPWTVATYMIAGRGTPDQAPAHALKDENRELFEALLARITQGTIEYLSRQIEAGAEVVKIFDSWAGSLKGADFQRYALEPAREITAAIKARHPDIPVIGFPREAGDGYIGFAKATGVDCVALDNSVSAEWAAANVQVDGCVQGNLASSHMVTGGQALIDETRAIVKAFSGGPHIFNLGHGITPDADPDNVQRMIDAVRGQ.

Residues 25-29 (RQAGR), D75, Y152, S207, and H323 contribute to the substrate site.

The protein belongs to the uroporphyrinogen decarboxylase family. In terms of assembly, homodimer.

It is found in the cytoplasm. The enzyme catalyses uroporphyrinogen III + 4 H(+) = coproporphyrinogen III + 4 CO2. The protein operates within porphyrin-containing compound metabolism; protoporphyrin-IX biosynthesis; coproporphyrinogen-III from 5-aminolevulinate: step 4/4. Functionally, catalyzes the decarboxylation of four acetate groups of uroporphyrinogen-III to yield coproporphyrinogen-III. This chain is Uroporphyrinogen decarboxylase, found in Roseobacter denitrificans (strain ATCC 33942 / OCh 114) (Erythrobacter sp. (strain OCh 114)).